The primary structure comprises 299 residues: MPIIIPQDLPARRILDAESVFTLGDADARRQDIRALQVVVLNLMPTKVTTETQIARVLANTPLQVELTLIHTASYQPTHTDPEHLRNFYSTFDQIRDRQFDGLIVTGAPVETLPWLAVDYWSELTTILDWSREAVRSSLFICWGAQAALQHFHGIEKQTLPAKRFGVFWHHLRDRSSPLVRGHDDDFLVPVSRHTEVIAAEVLAQSQLQILAESSEAGLHLLWDADQHRTYLFNHPEYDADTLDREYRRDREKGLPIQLPLNYYPNDDPNQVPTVRWRSHAQLLYTNWLNYEVYQPLSR.

The active-site Acyl-thioester intermediate is the cysteine 142. Residues lysine 163 and serine 192 each contribute to the substrate site. Residue histidine 235 is the Proton acceptor of the active site. Residue glutamate 237 is part of the active site. Substrate is bound at residue arginine 249.

The protein belongs to the MetA family.

It localises to the cytoplasm. The enzyme catalyses L-homoserine + acetyl-CoA = O-acetyl-L-homoserine + CoA. Its pathway is amino-acid biosynthesis; L-methionine biosynthesis via de novo pathway; O-acetyl-L-homoserine from L-homoserine: step 1/1. Transfers an acetyl group from acetyl-CoA to L-homoserine, forming acetyl-L-homoserine. This Synechococcus sp. (strain ATCC 27144 / PCC 6301 / SAUG 1402/1) (Anacystis nidulans) protein is Homoserine O-acetyltransferase.